The primary structure comprises 456 residues: Gustatory receptor for sugar taste 64a (456 aa).

Residues 1–30 (MKGPNLNFRKTPSKDNGVKQVESLARPETP) are disordered. At 1–91 (MKGPNLNFRK…RESNPRRVRF (91 aa)) the chain is on the cytoplasmic side. Residues 92–114 (AYKSIPMFVTLIFMIATSILFLS) form a helical membrane-spanning segment. Topologically, residues 115-128 (MFTHLLKIGITAKN) are extracellular. Residues 129-150 (FVGLVFFGCVLSAYVVFIRLAK) traverse the membrane as a helical segment. Glycine 131 serves as a coordination point for sucrose. Topologically, residues 151–182 (KWPAVVRIWTRTEIPFTKPPYEIPKRNLSRRV) are cytoplasmic. Residues 183–205 (QLAALAIIGLSLGEHALYQVSAI) form a helical membrane-spanning segment. Sucrose-binding residues include glutamate 196, histidine 197, and tyrosine 234. Positions 196, 197, 234, 253, and 257 each coordinate D-maltose. Topologically, residues 206-245 (LSYTRRIQMCANITTVPSFNNYMQTNYDYVFQLLPYSPII) are extracellular. A helical transmembrane segment spans residues 246-271 (AVLILLINGACTFVWNYMDLFIMMIS). Residue threonine 257 participates in sucrose binding. Over 272 to 318 (KGLSYRFEQITTRIRKLEHEEVCESVFIQIREHYVKMCELLEFVDSA) the chain is Cytoplasmic. The helical transmembrane segment at 319–342 (MSSLILLSCVNNLYFVCYQLLNVF) threads the bilayer. Over 343–350 (NKLRWPIN) the chain is Extracellular. A helical membrane pass occupies residues 351–373 (YIYFWYSLLYLIGRTAFVFLTAA). Residue tyrosine 353 participates in sucrose binding. Tyrosine 353 is a D-maltose binding site. Residues 374–421 (DINEESKRGLGVLRRVSSRSWCVEVERLIFQMTTQTVALSGKKFYFLT) lie on the Cytoplasmic side of the membrane. The helical transmembrane segment at 422–441 (RRLLFGMAGTIVTYELVLLQ) threads the bilayer. The Extracellular portion of the chain corresponds to 442 to 456 (FDEPNRRKGLQPLCA).

It belongs to the insect chemoreceptor superfamily. Gustatory receptor (GR) family. Gr5a subfamily. Homotetramer. As to expression, expressed in Gr5a-expressing sugar-sensing cells.

Its subcellular location is the cell membrane. In terms of biological role, one of the few identified sugar gustatory receptors identified so far and which promotes the starvation-induced increase of feeding motivation. Required in combination with Gr64f to detect sucrose, maltose, and glucose. In Drosophila melanogaster (Fruit fly), this protein is Gustatory receptor for sugar taste 64a (Gr64a).